Consider the following 260-residue polypeptide: Ribosomal protein L11 methyltransferase (260 aa).

Residues threonine 119, glycine 140, aspartate 162, and asparagine 203 each contribute to the S-adenosyl-L-methionine site.

The protein belongs to the methyltransferase superfamily. PrmA family.

It localises to the cytoplasm. It catalyses the reaction L-lysyl-[protein] + 3 S-adenosyl-L-methionine = N(6),N(6),N(6)-trimethyl-L-lysyl-[protein] + 3 S-adenosyl-L-homocysteine + 3 H(+). Its function is as follows. Methylates ribosomal protein L11. In Thermosipho africanus (strain TCF52B), this protein is Ribosomal protein L11 methyltransferase.